The primary structure comprises 727 residues: ABC transporter G family member STR2 (727 aa).

Topologically, residues 1–475 (MKTQGLELET…NFTNIRRTPE (475 aa)) are cytoplasmic. The region spanning 25–275 (LEFESLTYTV…LNRMGRKIPK (251 aa)) is the ABC transporter domain. 69-76 (GPSGAGKS) provides a ligand contact to ATP. A helical transmembrane segment spans residues 476-496 (LFLSRLMVLTFMGVMMATMFH). Residues 497–510 (NPKNTLQGITNRLS) are Extracellular-facing. Residues 511–531 (FFIFTVCLFFFSSNDAVPAFI) form a helical membrane-spanning segment. Residues 532–559 (QERFIFIRETSHNAYRASCYTIASLITH) are Cytoplasmic-facing. Residues 560–580 (MPFLALQALAYAAIVWFALEL) form a helical membrane-spanning segment. Topologically, residues 581-583 (RGP) are extracellular. A helical membrane pass occupies residues 584–604 (FIYFFLVLFISLLSTNSFVVF). The Cytoplasmic segment spans residues 605 to 612 (VSSIVPNY). A helical transmembrane segment spans residues 613-633 (ILGYAAVIAFTALFFLFCGYF). At 634–699 (LSSEDIPLYW…GTEEIKKRNN (66 aa)) the chain is on the extracellular side. Asn-667 carries an N-linked (GlcNAc...) asparagine glycan. The chain crosses the membrane as a helical span at residues 700-720 (VLIMLGWAVLYRILFYIILRF). Residues 721–727 (ASKNQRS) are Cytoplasmic-facing.

The protein belongs to the ABC transporter superfamily. ABCG family. Stunted arbuscule (STR) subfamily. Heterodimerizes with STR; the resulting transporter is located in the peri-arbuscular membrane. Expressed constitutively in the vascular tissue of roots.

Its subcellular location is the cell membrane. In terms of biological role, together with STR, required for arbuscule development in arbuscular mycorrhizal symbiosis. The sequence is that of ABC transporter G family member STR2 from Medicago truncatula (Barrel medic).